Here is a 320-residue protein sequence, read N- to C-terminus: MRLPSRQQVLKMLATFSLALGLFAAKVQAHGGVIGYSWDGTWYEGWHPYNTPVGQTSIERPWATFDPIMDATASTVGCNNDGNPGPNQLTATVAAGTAITAYWNQVWPHPYGPMTTYLGKCPGSSCDGVNTNSLKWFKIDEAGLLSGTVGKGVWGSGKMIDQNNSWTTTIPSTVPSGAYMIRFETIALHSLPAQIYPECAQLTITGGGNRAPTSSELVSFPGGYSNSDPGLTVNLYTQEAMTDTTYIVPGPPLYGSGGNGGSPTTTPHTTTPITTSPPPTSTPGTIPQYGQCGGIGWTGGTGCVAPYQCKVINDYYSQCL.

A signal peptide spans 1 to 29 (MRLPSRQQVLKMLATFSLALGLFAAKVQA). Cystine bridges form between C78-C199 and C121-C126. Cu(2+) is bound at residue H109. An N-linked (GlcNAc...) asparagine glycan is attached at N163. H189 and Q194 together coordinate O2. Y196 contacts Cu(2+). Residues 255–284 (GSGGNGGSPTTTPHTTTPITTSPPPTSTPG) are disordered. Over residues 262–274 (SPTTTPHTTTPIT) the composition is skewed to low complexity. The CBM1 domain maps to 284–320 (GTIPQYGQCGGIGWTGGTGCVAPYQCKVINDYYSQCL).

This sequence belongs to the polysaccharide monooxygenase AA9 family. It depends on Cu(2+) as a cofactor.

The protein resides in the secreted. It carries out the reaction [(1-&gt;4)-beta-D-glucosyl]n+m + reduced acceptor + O2 = 4-dehydro-beta-D-glucosyl-[(1-&gt;4)-beta-D-glucosyl]n-1 + [(1-&gt;4)-beta-D-glucosyl]m + acceptor + H2O.. Its function is as follows. Lytic polysaccharide monooxygenase (LPMO)-like protein that binds strongly to cellulose. Seems not to acts as an endoglucanase, a ceUobiohydrolase able to hydrolyze fluorogenic cellobiosides, a /3-glucosidase, a xylanase, nor a cellobiose:quinone oxidoreductase. In Agaricus bisporus (White button mushroom), this protein is AA9 family lytic polysaccharide monooxygenase-like protein CEL1.